A 335-amino-acid chain; its full sequence is Pyridoxal 5'-phosphate synthase subunit PdxS (335 aa).

Asp30 is a binding site for D-ribose 5-phosphate. Lys87 acts as the Schiff-base intermediate with D-ribose 5-phosphate in catalysis. Gly159 provides a ligand contact to D-ribose 5-phosphate. Residue Arg171 coordinates D-glyceraldehyde 3-phosphate. D-ribose 5-phosphate is bound by residues Gly257 and Gly278–Ser279.

Belongs to the PdxS/SNZ family. As to quaternary structure, homohexamer. In the presence of PdxT, forms a dodecamer of heterodimers.

It catalyses the reaction aldehydo-D-ribose 5-phosphate + D-glyceraldehyde 3-phosphate + L-glutamine = pyridoxal 5'-phosphate + L-glutamate + phosphate + 3 H2O + H(+). It functions in the pathway cofactor biosynthesis; pyridoxal 5'-phosphate biosynthesis. Its function is as follows. Catalyzes the formation of pyridoxal 5'-phosphate from ribose 5-phosphate (RBP), glyceraldehyde 3-phosphate (G3P) and ammonia. The ammonia is provided by the PdxT subunit. Can also use ribulose 5-phosphate and dihydroxyacetone phosphate as substrates, resulting from enzyme-catalyzed isomerization of RBP and G3P, respectively. This Pyrococcus horikoshii (strain ATCC 700860 / DSM 12428 / JCM 9974 / NBRC 100139 / OT-3) protein is Pyridoxal 5'-phosphate synthase subunit PdxS.